The chain runs to 274 residues: Formamidopyrimidine-DNA glycosylase (274 aa).

Pro2 (schiff-base intermediate with DNA) is an active-site residue. Glu3 functions as the Proton donor in the catalytic mechanism. Catalysis depends on Lys59, which acts as the Proton donor; for beta-elimination activity. 3 residues coordinate DNA: His93, Arg112, and Lys153. The FPG-type zinc-finger motif lies at Gln238 to Gln272. Arg262 serves as the catalytic Proton donor; for delta-elimination activity.

Belongs to the FPG family. Monomer. Zn(2+) is required as a cofactor.

The catalysed reaction is Hydrolysis of DNA containing ring-opened 7-methylguanine residues, releasing 2,6-diamino-4-hydroxy-5-(N-methyl)formamidopyrimidine.. It carries out the reaction 2'-deoxyribonucleotide-(2'-deoxyribose 5'-phosphate)-2'-deoxyribonucleotide-DNA = a 3'-end 2'-deoxyribonucleotide-(2,3-dehydro-2,3-deoxyribose 5'-phosphate)-DNA + a 5'-end 5'-phospho-2'-deoxyribonucleoside-DNA + H(+). Its function is as follows. Involved in base excision repair of DNA damaged by oxidation or by mutagenic agents. Acts as a DNA glycosylase that recognizes and removes damaged bases. Has a preference for oxidized purines, such as 7,8-dihydro-8-oxoguanine (8-oxoG). Has AP (apurinic/apyrimidinic) lyase activity and introduces nicks in the DNA strand. Cleaves the DNA backbone by beta-delta elimination to generate a single-strand break at the site of the removed base with both 3'- and 5'-phosphates. In Mycoplasma mobile (strain ATCC 43663 / 163K / NCTC 11711) (Mesomycoplasma mobile), this protein is Formamidopyrimidine-DNA glycosylase.